Reading from the N-terminus, the 882-residue chain is MTTSELPEHLAKHEVRYADHRQVERDRLTPMMQHYAEVKDQHLQQILLYRMGDFFECFFQDAIVVARELELVLTSKEAGKEVGRVPMAGIPYHALDRYASQLVEKGYAIAICDQVETAAQAQGPLVRREITRIITPGTILEEGMLQARRNNFLAAVVIAGEHWGLAYADSSTGDYWTSQSTGLEGLTQELYRLQPSEVLFPSAAPDLAGLLRPGQSKPQQIPDCLPDSFCYALRSPMPFELHEARQRLLEHFQLRSLEGCGCEQLPLAIRAAGGLLDYLGETQRESLAPLQKPRTYSLSEFLILDQQTRRNLEITQTQRDGSFHGSLLWALDRTMTSMGGRLLRRWLLQPLLNPEAIRNRQAAIQELCQDGRLRQDLRSLLQKIYDLERLSGRAGAGTANARDLLALAESLLRLPELAQLLSRAQSPLLAQLQQVPPELEQLGDRLQQHLVESPPLQLTEGGLIRSGVAIALDELRQQVESDRQWIASLEASERTATGINSLKVGYSKTFGYFISLSRSKADQVPDHYIRRQTLTNEERFITPDLKERESRILNAQTDLNQLEYDLFVGLRSEVSHHVETIRAIATAVAAADVLAALAEVAVYQNYCCPEIRDDRQLAIQDGRHPVVEQALPSGFYVPNSCGLGSDRGPDLIVLTGPNASGKSCYLRQVGLIQLLAQIGSFVPAKNAQVGICDRIFTRVGAVDDLATGQSTFMVEMDETANILNHATARSLVLLDEIGRGTATFDGLSIAWAVAEYLAREIQARTIFATHYHELNELSGLLKNVANFQVTVKELPDRIVFLHQVQPGGADRSYGIEAARLAGLPSEVIDRAREVMSRIEKHSRIAVGLRRGNGSQRRTQASPQQIDATIATEQLGLFSGPSH.

An ATP-binding site is contributed by G656–S663.

This sequence belongs to the DNA mismatch repair MutS family.

Functionally, this protein is involved in the repair of mismatches in DNA. It is possible that it carries out the mismatch recognition step. This protein has a weak ATPase activity. The protein is DNA mismatch repair protein MutS of Synechococcus sp. (strain ATCC 27144 / PCC 6301 / SAUG 1402/1) (Anacystis nidulans).